Reading from the N-terminus, the 307-residue chain is Putative oxidoreductase YceM (307 aa).

It belongs to the Gfo/Idh/MocA family.

The polypeptide is Putative oxidoreductase YceM (yceM) (Salmonella typhimurium (strain LT2 / SGSC1412 / ATCC 700720)).